The sequence spans 188 residues: Translation initiation factor IF-3 (188 aa).

The protein belongs to the IF-3 family. In terms of assembly, monomer.

The protein localises to the cytoplasm. IF-3 binds to the 30S ribosomal subunit and shifts the equilibrium between 70S ribosomes and their 50S and 30S subunits in favor of the free subunits, thus enhancing the availability of 30S subunits on which protein synthesis initiation begins. The protein is Translation initiation factor IF-3 of Fusobacterium nucleatum subsp. nucleatum (strain ATCC 25586 / DSM 15643 / BCRC 10681 / CIP 101130 / JCM 8532 / KCTC 2640 / LMG 13131 / VPI 4355).